A 188-amino-acid chain; its full sequence is Elongation factor P (188 aa).

The protein belongs to the elongation factor P family.

Its subcellular location is the cytoplasm. The protein operates within protein biosynthesis; polypeptide chain elongation. Involved in peptide bond synthesis. Stimulates efficient translation and peptide-bond synthesis on native or reconstituted 70S ribosomes in vitro. Probably functions indirectly by altering the affinity of the ribosome for aminoacyl-tRNA, thus increasing their reactivity as acceptors for peptidyl transferase. The protein is Elongation factor P of Aeromonas salmonicida (strain A449).